The sequence spans 546 residues: uncharacterized protein (546 aa).

Belongs to the IIV-6 098R family.

This is an uncharacterized protein from Aedes vexans (Inland floodwater mosquito).